Here is a 258-residue protein sequence, read N- to C-terminus: Translocon-associated protein subunit alpha (258 aa).

Positions 1 to 24 (MMNLRVLFLALLLLASPLLQVARC) are cleaved as a signal peptide. Over 25–190 (QSDAEDHSSL…ESGGLLSGES (166 aa)) the chain is Lumenal. Residues Asn57, Asn119, and Asn127 are each glycosylated (N-linked (GlcNAc...) asparagine). The helical transmembrane segment at 191–209 (VFLLTLGIGLLLLLGLWAY) threads the bilayer. The Cytoplasmic segment spans residues 210-258 (SQVQRLTKKTKKVSKVEVGTRSTEASLDEWLEGTTLAKTSSGKTKNKKN).

Belongs to the TRAP-alpha family. As to quaternary structure, heterotetramer of TRAP-alpha, TRAP-beta, TRAP-delta and TRAP-gamma. In terms of processing, phosphorylated in its cytoplasmic tail.

It is found in the endoplasmic reticulum membrane. TRAP proteins are part of a complex whose function is to bind calcium to the ER membrane and thereby regulate the retention of ER resident proteins. May be involved in the recycling of the translocation apparatus after completion of the translocation process or may function as a membrane-bound chaperone facilitating folding of translocated proteins. The protein is Translocon-associated protein subunit alpha of Arabidopsis thaliana (Mouse-ear cress).